Consider the following 82-residue polypeptide: Omega-conotoxin-like Am6.2 (82 aa).

The signal sequence occupies residues 1 to 22; it reads MKLTCMMIVAVLFLTAWTFVTA. Positions 23–52 are excised as a propeptide; sequence VPHSSNVLENLYLKARHEMENQEASKLNMR. 3 disulfides stabilise this stretch: Cys56/Cys73, Cys63/Cys77, and Cys72/Cys81. Trp76 carries the post-translational modification 6'-bromotryptophan; partial; in Am6.2b (major form).

It belongs to the conotoxin O1 family. Post-translationally, mostly non-hydroxylated. Two forms of this peptides have been described. Am6.2a (Am3136) is not unmodified, while Am6.2b (Am3214) is Trp-76 brominated. Both forms are found in venom with a much more abundant brominated form. As to expression, expressed by the venom duct.

The protein resides in the secreted. Omega-conotoxins act at presynaptic membranes, they bind and block voltage-gated calcium channels (Cav). The protein is Omega-conotoxin-like Am6.2 of Conus amadis (Amadis cone).